Reading from the N-terminus, the 442-residue chain is Chromosomal replication initiator protein DnaA (442 aa).

The interval 1–68 is domain I, interacts with DnaA modulators; that stretch reads MDAWPRCLER…ELLAYFVGNG (68 aa). The domain II stretch occupies residues 68–104; it reads GDVALAVGSRPRAPEPAPAPVAVPSAPQAAPIVPFAG. The tract at residues 105–322 is domain III, AAA+ region; it reads NLDSHYTFAN…GALNTLVARA (218 aa). ATP contacts are provided by Gly-150, Gly-152, Lys-153, and Thr-154. The segment at 323–442 is domain IV, binds dsDNA; that stretch reads NFTGRSITVE…WEKLIRKLSE (120 aa).

Belongs to the DnaA family. Oligomerizes as a right-handed, spiral filament on DNA at oriC.

It is found in the cytoplasm. In terms of biological role, plays an essential role in the initiation and regulation of chromosomal replication. ATP-DnaA binds to the origin of replication (oriC) to initiate formation of the DNA replication initiation complex once per cell cycle. Binds the DnaA box (a 9 base pair repeat at the origin) and separates the double-stranded (ds)DNA. Forms a right-handed helical filament on oriC DNA; dsDNA binds to the exterior of the filament while single-stranded (ss)DNA is stabiized in the filament's interior. The ATP-DnaA-oriC complex binds and stabilizes one strand of the AT-rich DNA unwinding element (DUE), permitting loading of DNA polymerase. After initiation quickly degrades to an ADP-DnaA complex that is not apt for DNA replication. Binds acidic phospholipids. The polypeptide is Chromosomal replication initiator protein DnaA (Xanthomonas axonopodis pv. citri (strain 306)).